We begin with the raw amino-acid sequence, 367 residues long: uncharacterized protein (367 aa).

The helical transmembrane segment at 8–28 threads the bilayer; it reads VLIGTFVLAAILAVFGFIYWL.

It localises to the membrane. This is an uncharacterized protein from Bradyrhizobium diazoefficiens (strain JCM 10833 / BCRC 13528 / IAM 13628 / NBRC 14792 / USDA 110).